We begin with the raw amino-acid sequence, 351 residues long: Protein arginine N-methyltransferase 1-B (351 aa).

One can recognise an SAM-dependent MTase PRMT-type domain in the interval 30-331 (KDYYFDSYAH…KNNRDLDFTV (302 aa)). S-adenosyl-L-methionine contacts are provided by His-43, Arg-52, Gly-76, Glu-98, and Glu-127. Active-site residues include Glu-142 and Glu-151.

The protein belongs to the class I-like SAM-binding methyltransferase superfamily. Protein arginine N-methyltransferase family. Homodimer. Homooctamer; individual homodimers associates to form a homooctamer and homooligomerization is required for proper localization to the cell membrane. Individual homodimers can associate to form a homohexamer. Component of a complex with lsm14a/rap55a. Interacts with cirbp. In terms of tissue distribution, from the onset of gastrulation, expressed in dorsal mesoderm, and in dorsal and ventral ectoderm. At the neurula and tail bud stages, expression is restricted to the neuroectoderm, with highest expression in the anterior neural plate.

It localises to the nucleus. The protein localises to the nucleoplasm. The protein resides in the cytoplasm. It is found in the cytosol. The catalysed reaction is L-arginyl-[protein] + 2 S-adenosyl-L-methionine = N(omega),N(omega)-dimethyl-L-arginyl-[protein] + 2 S-adenosyl-L-homocysteine + 2 H(+). The enzyme catalyses L-arginyl-[protein] + S-adenosyl-L-methionine = N(omega)-methyl-L-arginyl-[protein] + S-adenosyl-L-homocysteine + H(+). It catalyses the reaction N(omega)-methyl-L-arginyl-[protein] + S-adenosyl-L-methionine = N(omega),N(omega)-dimethyl-L-arginyl-[protein] + S-adenosyl-L-homocysteine + H(+). In terms of biological role, arginine methyltransferase that methylates (mono and asymmetric dimethylation) the guanidino nitrogens of arginyl residues present in target proteins. Constitutes the main enzyme that mediates monomethylation and asymmetric dimethylation of histone H4 'Arg-4' (H4R3me1 and H4R3me2a, respectively), a specific tag for epigenetic transcriptional activation. Methylates ilf3 to regulate its DNA-binding activity. Required for neural induction, playing a key role in the control of epidermal versus neural cell fate choice. This chain is Protein arginine N-methyltransferase 1-B (prmt1-b), found in Xenopus laevis (African clawed frog).